The primary structure comprises 232 residues: Enolase-phosphatase E1 (232 aa).

The protein belongs to the HAD-like hydrolase superfamily. MasA/MtnC family. As to quaternary structure, monomer. Requires Mg(2+) as cofactor.

The catalysed reaction is 5-methylsulfanyl-2,3-dioxopentyl phosphate + H2O = 1,2-dihydroxy-5-(methylsulfanyl)pent-1-en-3-one + phosphate. Its pathway is amino-acid biosynthesis; L-methionine biosynthesis via salvage pathway; L-methionine from S-methyl-5-thio-alpha-D-ribose 1-phosphate: step 3/6. It functions in the pathway amino-acid biosynthesis; L-methionine biosynthesis via salvage pathway; L-methionine from S-methyl-5-thio-alpha-D-ribose 1-phosphate: step 4/6. In terms of biological role, bifunctional enzyme that catalyzes the enolization of 2,3-diketo-5-methylthiopentyl-1-phosphate (DK-MTP-1-P) into the intermediate 2-hydroxy-3-keto-5-methylthiopentenyl-1-phosphate (HK-MTPenyl-1-P), which is then dephosphorylated to form the acireductone 1,2-dihydroxy-3-keto-5-methylthiopentene (DHK-MTPene). The protein is Enolase-phosphatase E1 of Xylella fastidiosa (strain M12).